An 858-amino-acid polypeptide reads, in one-letter code: Zinc finger protein ZXDC (858 aa).

Disordered stretches follow at residues 1–73 (MDLP…GGDS), 85–108 (DTHG…PAAA), and 142–175 (AAPS…GSPA). A compositionally biased stretch (pro residues) spans 59–68 (APGPSPPPPE). Residues 142-152 (AAPSLHPATTP) are compositionally biased toward low complexity. 10 C2H2-type zinc fingers span residues 176–200 (YRCP…LLTH), 209–233 (FKCP…LQSH), 239–263 (FSCP…MKGH), 269–291 (FKCE…QRSH), 298–322 (YKCD…NRAH), 329–353 (FSCS…LRSH), 359–383 (FICD…KRKH), 389–413 (FTCP…SITH), 419–443 (FECP…SKKH), and 452–477 (SRCP…VRQH). The segment covering 624–634 (DSPALTPSNNL) has biased composition (polar residues). Residues 624 to 652 (DSPALTPSNNLTAPGTTPTSSDTTQETGS) form a disordered region. Low complexity predominate over residues 635-651 (TAPGTTPTSSDTTQETG). A Glycyl lysine isopeptide (Lys-Gly) (interchain with G-Cter in SUMO) cross-link involves residue Lys661. 2 disordered regions span residues 671 to 714 (DVVQ…LESG) and 727 to 751 (VKKK…KVKG). The segment covering 681 to 692 (GPSQSVLSSSTE) has biased composition (polar residues).

It belongs to the ZXD family. As to quaternary structure, self-associates. Interacts with ZXDB and CIITA. Post-translationally, sumoylated at Lys-661 with SUMO1, SUMO2 and SUMO3; sumoylation enhances the activity of the transcriptional activation domain.

The protein resides in the nucleus. Cooperates with CIITA to promote transcription of MHC class I and MHC class II genes. In Mus musculus (Mouse), this protein is Zinc finger protein ZXDC (Zxdc).